We begin with the raw amino-acid sequence, 598 residues long: DNA primase (598 aa).

Residues 38–62 (CPFHDEKTPSFTVSEDKQICHCFGC) form a CHC2-type zinc finger. Residues 260–341 (DEIILLEGFM…NVYVVQLPSG (82 aa)) form the Toprim domain. 3 residues coordinate Mg(2+): Glu-266, Asp-310, and Asp-312.

The protein belongs to the DnaG primase family. In terms of assembly, monomer. Interacts with DnaB. Requires Zn(2+) as cofactor. Mg(2+) is required as a cofactor.

It carries out the reaction ssDNA + n NTP = ssDNA/pppN(pN)n-1 hybrid + (n-1) diphosphate.. In terms of biological role, RNA polymerase that catalyzes the synthesis of short RNA molecules used as primers for DNA polymerase during DNA replication. In Staphylococcus epidermidis (strain ATCC 12228 / FDA PCI 1200), this protein is DNA primase.